Reading from the N-terminus, the 239-residue chain is Putative transcriptional regulator of 2-aminoethylphosphonate degradation operons (239 aa).

The region spanning 8–76 (IPQYLLIKAQ…DRRGWFVTPE (69 aa)) is the HTH gntR-type domain. Residues 36–55 (ERELCAIFNTTRITIRESLA) constitute a DNA-binding region (H-T-H motif).

This Salmonella paratyphi A (strain ATCC 9150 / SARB42) protein is Putative transcriptional regulator of 2-aminoethylphosphonate degradation operons (phnR).